We begin with the raw amino-acid sequence, 62 residues long: Pro-MCH variant (62 aa).

Positions 23-41 are NGE-like; it reads GSVAFPAENGVQDTESTQE. A disordered region spans residues 29-62; it reads AENGVQDTESTQEKRETGDEENSAKFPIGRRDFD. The NEI-like stretch occupies residues 44 to 56; it reads ETGDEENSAKFPI. The tract at residues 60 to 62 is melanin-concentrating hormone-like; that stretch reads DFD.

This sequence belongs to the melanin-concentrating hormone family.

The polypeptide is Pro-MCH variant (PMCHL1) (Pan paniscus (Pygmy chimpanzee)).